The primary structure comprises 451 residues: Bifunctional protein GlmU (451 aa).

Positions M1 to R229 are pyrophosphorylase. Residues L8 to G11, K22, Q72, and G77 to T78 contribute to the UDP-N-acetyl-alpha-D-glucosamine site. D102 is a Mg(2+) binding site. The UDP-N-acetyl-alpha-D-glucosamine site is built by G139, E154, and N227. N227 contacts Mg(2+). Residues V230 to N250 form a linker region. Residues G251–K451 form an N-acetyltransferase region. R332 and K350 together coordinate UDP-N-acetyl-alpha-D-glucosamine. H362 serves as the catalytic Proton acceptor. Positions 365 and 376 each coordinate UDP-N-acetyl-alpha-D-glucosamine. Residues N385–Y386, A422, and R439 each bind acetyl-CoA.

The protein in the N-terminal section; belongs to the N-acetylglucosamine-1-phosphate uridyltransferase family. This sequence in the C-terminal section; belongs to the transferase hexapeptide repeat family. Homotrimer. Requires Mg(2+) as cofactor.

It localises to the cytoplasm. It catalyses the reaction alpha-D-glucosamine 1-phosphate + acetyl-CoA = N-acetyl-alpha-D-glucosamine 1-phosphate + CoA + H(+). It carries out the reaction N-acetyl-alpha-D-glucosamine 1-phosphate + UTP + H(+) = UDP-N-acetyl-alpha-D-glucosamine + diphosphate. It participates in nucleotide-sugar biosynthesis; UDP-N-acetyl-alpha-D-glucosamine biosynthesis; N-acetyl-alpha-D-glucosamine 1-phosphate from alpha-D-glucosamine 6-phosphate (route II): step 2/2. It functions in the pathway nucleotide-sugar biosynthesis; UDP-N-acetyl-alpha-D-glucosamine biosynthesis; UDP-N-acetyl-alpha-D-glucosamine from N-acetyl-alpha-D-glucosamine 1-phosphate: step 1/1. Its pathway is bacterial outer membrane biogenesis; LPS lipid A biosynthesis. Catalyzes the last two sequential reactions in the de novo biosynthetic pathway for UDP-N-acetylglucosamine (UDP-GlcNAc). The C-terminal domain catalyzes the transfer of acetyl group from acetyl coenzyme A to glucosamine-1-phosphate (GlcN-1-P) to produce N-acetylglucosamine-1-phosphate (GlcNAc-1-P), which is converted into UDP-GlcNAc by the transfer of uridine 5-monophosphate (from uridine 5-triphosphate), a reaction catalyzed by the N-terminal domain. In Staphylococcus saprophyticus subsp. saprophyticus (strain ATCC 15305 / DSM 20229 / NCIMB 8711 / NCTC 7292 / S-41), this protein is Bifunctional protein GlmU.